Consider the following 1010-residue polypeptide: Eukaryotic translation initiation factor 4E transporter (1010 aa).

The YXXXXLphi motif motif lies at 10 to 16 (YSKVDLL). 5 disordered regions span residues 154 to 182 (GSNS…RKGS), 196 to 277 (PDHD…RLVE), 289 to 320 (YDSK…SKRG), 354 to 391 (NEER…SNDS), and 921 to 960 (QSNP…ERIS). The segment covering 201-211 (CMSSSPTFSTS) has biased composition (polar residues). The segment covering 227 to 247 (DNWDYKNEKTVEASIENEKET) has biased composition (basic and acidic residues). Over residues 248–263 (SPNGSGSTSSLNQHNQ) the composition is skewed to polar residues. Basic and acidic residues-rich tracts occupy residues 354 to 364 (NEERSVTEDKN) and 372 to 384 (KNLD…DEAS). Residues 934–953 (SDSSDSGNVIKANSLTSPSY) are compositionally biased toward polar residues.

This sequence belongs to the 4E-T/EIF4E-T family. In terms of assembly, interacts (via YXXXXLphi motif) with eIF4E1. Interacts with DDX6/me31B. As to expression, expressed in all larval and adult organs and tissues, with highest levels in the ovary.

Its subcellular location is the cytoplasm. The protein localises to the P-body. It is found in the nucleus. In terms of biological role, eIF4E1-binding protein that regulates translation and stability of mRNAs in processing bodies (P-bodies). Probably plays a role in P-bodies to coordinate the storage of translationally inactive mRNAs in the cytoplasm and prevent their degradation. Acts as a binding platform for multiple RNA-binding proteins. Required for the formation of P-bodies. This Drosophila melanogaster (Fruit fly) protein is Eukaryotic translation initiation factor 4E transporter.